The following is a 451-amino-acid chain: tRNA(Ile)-lysidine synthase (451 aa).

21–26 contributes to the ATP binding site; that stretch reads SGGLDS.

This sequence belongs to the tRNA(Ile)-lysidine synthase family.

The protein resides in the cytoplasm. It carries out the reaction cytidine(34) in tRNA(Ile2) + L-lysine + ATP = lysidine(34) in tRNA(Ile2) + AMP + diphosphate + H(+). Ligates lysine onto the cytidine present at position 34 of the AUA codon-specific tRNA(Ile) that contains the anticodon CAU, in an ATP-dependent manner. Cytidine is converted to lysidine, thus changing the amino acid specificity of the tRNA from methionine to isoleucine. This is tRNA(Ile)-lysidine synthase from Yersinia pseudotuberculosis serotype O:1b (strain IP 31758).